Here is a 250-residue protein sequence, read N- to C-terminus: Envelope glycoprotein L (250 aa).

Residues 1–18 (MELLLFVMSLILLTFSKA) form the signal peptide. The 209-residue stretch at 31–239 (KLDDCIAAVI…ETYNSKLPFR (209 aa)) folds into the gL betaherpesvirus-type domain. Cys136 and Cys141 are disulfide-bonded.

Belongs to the herpesviridae glycoprotein L (gL) family. Betaherpesvirinae gL subfamily. Interacts with glycoprotein H (gH); this interaction is necessary for the correct processing and cell surface expression of gH. Part of a gH-gL-gO complex.

It is found in the virion membrane. Its subcellular location is the host cell membrane. The protein resides in the host Golgi apparatus. The protein localises to the host trans-Golgi network. Its function is as follows. The heterodimer glycoprotein H-glycoprotein L is required for the fusion of viral and plasma membranes leading to virus entry into the host cell. Acts as a functional inhibitor of gH and maintains gH in an inhibited form. Upon binding to host integrins, gL dissociates from gH leading to activation of the viral fusion glycoproteins gB and gH. The protein is Envelope glycoprotein L of Human herpesvirus 6A (strain Uganda-1102) (HHV-6 variant A).